The sequence spans 662 residues: 72 kDa type IV collagenase (662 aa).

Positions 1 to 29 are cleaved as a signal peptide; that stretch reads MEALGARGALAGFLRALCVLGCLLGRATA. Positions 30-109 are cleaved as a propeptide — activation peptide; that stretch reads PPSPVIKFPG…PRCGNPDVAN (80 aa). Residues 100–107 carry the Cysteine switch motif; it reads PRCGNPDV. Cys102 provides a ligand contact to Zn(2+). Residues 110 to 221 are collagenase-like 1; that stretch reads YNFFPRKPKW…LWTLGEGQVV (112 aa). Residues Asp134 and Asp168 each coordinate Ca(2+). Zn(2+) contacts are provided by His178 and Asp180. Ca(2+) is bound by residues Asp185 and Gly186. A Zn(2+)-binding site is contributed by His193. Residues Gly200, Gly202, and Asp204 each contribute to the Ca(2+) site. A Zn(2+)-binding site is contributed by His206. Positions 208, 209, and 211 each coordinate Ca(2+). A collagen-binding region spans residues 222 to 396; the sequence is RVKYGNADGE…WGFCPDQGYS (175 aa). Fibronectin type-II domains follow at residues 228-276, 286-334, and 344-392; these read ADGE…FCPH, ADGQ…FCPE, and SEGA…FCPD. Disulfide bonds link Cys233/Cys259, Cys247/Cys274, Cys291/Cys317, Cys305/Cys332, Cys349/Cys375, and Cys363/Cys390. The tract at residues 397–467 is collagenase-like 2; it reads LFLVAAHEFG…GPTPTLGPVT (71 aa). His403 provides a ligand contact to Zn(2+). The active site involves Glu404. His407 and His413 together coordinate Zn(2+). The interval 414-662 is required for inhibitor TIMP2 binding; the sequence is SQDPGALMAP…GSIKTDWLGC (249 aa). Cys471 and Cys662 form a disulfide bridge. Hemopexin repeat units follow at residues 474–518, 519–565, 567–615, and 616–662; these read DIVF…WPEL, PEKI…GLPP, VQRV…WNAI, and PDHL…WLGC. Asp478, Asp523, and Asp571 together coordinate Ca(2+). The N-linked (GlcNAc...) asparagine glycan is linked to Asn575. Position 620 (Asp620) interacts with Ca(2+). N-linked (GlcNAc...) asparagine glycosylation is present at Asn644.

Belongs to the peptidase M10A family. Interacts (via the C-terminal hemopexin-like domains-containing region) with the integrin alpha-V/beta-3; the interaction promotes vascular invasion in angiogenic vessels and melamoma cells. Interacts (via the C-terminal PEX domain) with TIMP2 (via the C-terminal); the interaction inhibits the degradation activity. Interacts with GSK3B. It depends on Ca(2+) as a cofactor. Requires Zn(2+) as cofactor. Post-translationally, phosphorylation on multiple sites modulates enzymatic activity. Phosphorylated by PKC in vitro. In terms of processing, the propeptide is processed by MMP14 (MT-MMP1) and MMP16 (MT-MMP3). Autocatalytic cleavage in the C-terminal produces the anti-angiogenic peptide, PEX. This processing appears to be facilitated by binding integrinv/beta3.

It is found in the secreted. The protein localises to the extracellular space. The protein resides in the extracellular matrix. Its subcellular location is the membrane. It localises to the nucleus. The catalysed reaction is Cleavage of gelatin type I and collagen types IV, V, VII, X. Cleaves the collagen-like sequence Pro-Gln-Gly-|-Ile-Ala-Gly-Gln.. Functionally, ubiquitinous metalloproteinase that is involved in diverse functions such as remodeling of the vasculature, angiogenesis, tissue repair, tumor invasion, inflammation, and atherosclerotic plaque rupture. As well as degrading extracellular matrix proteins, can also act on several nonmatrix proteins such as big endothelial 1 and beta-type CGRP promoting vasoconstriction. Also cleaves KISS at a Gly-|-Leu bond. Appears to have a role in myocardial cell death pathways. Contributes to myocardial oxidative stress by regulating the activity of GSK3beta. Cleaves GSK3beta in vitro. Involved in the formation of the fibrovascular tissues. PEX, the C-terminal non-catalytic fragment of MMP2, possesses anti-angiogenic and anti-tumor properties and inhibits cell migration and cell adhesion to FGF2 and vitronectin. Ligand for integrin alpha-v/beta-3 on the surface of blood vessels. This chain is 72 kDa type IV collagenase (MMP2), found in Oryctolagus cuniculus (Rabbit).